The primary structure comprises 150 residues: Cell division protein SepF (150 aa).

It belongs to the SepF family. In terms of assembly, homodimer. Interacts with FtsZ.

The protein localises to the cytoplasm. In terms of biological role, cell division protein that is part of the divisome complex and is recruited early to the Z-ring. Probably stimulates Z-ring formation, perhaps through the cross-linking of FtsZ protofilaments. Its function overlaps with FtsA. This chain is Cell division protein SepF, found in Clostridium beijerinckii (strain ATCC 51743 / NCIMB 8052) (Clostridium acetobutylicum).